A 184-amino-acid polypeptide reads, in one-letter code: GTP cyclohydrolase 1 (184 aa).

Residues C75, H78, and C146 each contribute to the Zn(2+) site.

Belongs to the GTP cyclohydrolase I family. As to quaternary structure, homomer.

The enzyme catalyses GTP + H2O = 7,8-dihydroneopterin 3'-triphosphate + formate + H(+). It participates in cofactor biosynthesis; 7,8-dihydroneopterin triphosphate biosynthesis; 7,8-dihydroneopterin triphosphate from GTP: step 1/1. This Finegoldia magna (strain ATCC 29328 / DSM 20472 / WAL 2508) (Peptostreptococcus magnus) protein is GTP cyclohydrolase 1.